A 430-amino-acid chain; its full sequence is Serine--tRNA ligase (430 aa).

237–239 lines the L-serine pocket; that stretch reads TAE. 268-270 contacts ATP; that stretch reads RAE. Glu291 is an L-serine binding site. Residue 355–358 coordinates ATP; sequence EISS. Ser391 is an L-serine binding site.

It belongs to the class-II aminoacyl-tRNA synthetase family. Type-1 seryl-tRNA synthetase subfamily. As to quaternary structure, homodimer. The tRNA molecule binds across the dimer.

The protein localises to the cytoplasm. The catalysed reaction is tRNA(Ser) + L-serine + ATP = L-seryl-tRNA(Ser) + AMP + diphosphate + H(+). It catalyses the reaction tRNA(Sec) + L-serine + ATP = L-seryl-tRNA(Sec) + AMP + diphosphate + H(+). The protein operates within aminoacyl-tRNA biosynthesis; selenocysteinyl-tRNA(Sec) biosynthesis; L-seryl-tRNA(Sec) from L-serine and tRNA(Sec): step 1/1. Catalyzes the attachment of serine to tRNA(Ser). Is also able to aminoacylate tRNA(Sec) with serine, to form the misacylated tRNA L-seryl-tRNA(Sec), which will be further converted into selenocysteinyl-tRNA(Sec). The chain is Serine--tRNA ligase from Serratia proteamaculans (strain 568).